A 231-amino-acid polypeptide reads, in one-letter code: Sugar fermentation stimulation protein homolog (231 aa).

Belongs to the SfsA family.

This is Sugar fermentation stimulation protein homolog from Citrifermentans bemidjiense (strain ATCC BAA-1014 / DSM 16622 / JCM 12645 / Bem) (Geobacter bemidjiensis).